Here is a 590-residue protein sequence, read N- to C-terminus: Probable metalloendopeptidase G1-type (590 aa).

Zn(2+) is bound at residue H41. E44 is an active-site residue. H45 contributes to the Zn(2+) binding site.

It belongs to the peptidase M44 family. The cofactor is Zn(2+).

In terms of biological role, seems to be involved in viral proteins maturation by cleavage at Ala-Gly-|-Xaa motifs. The protein is Probable metalloendopeptidase G1-type (GP045L) of Oryctolagus cuniculus (Rabbit).